Here is a 518-residue protein sequence, read N- to C-terminus: Protein CYCLOPS (518 aa).

The interval 401-451 (DKKRKSLERYGSITSAVSDDKGDTTKKRRVERSRKMAEAKERNSTPSVPSD) is disordered. Short sequence motifs (nuclear localization signal) lie at residues 402–405 (KKRK) and 426–429 (KKRR). Basic and acidic residues predominate over residues 433–443 (SRKMAEAKERN). Residues 452–518 (MQAVLKRCEN…ERILSETEKM (67 aa)) are a coiled coil.

Belongs to the CYCLOPS family. In terms of assembly, forms homodimers. Interacts with CCAMK. Post-translationally, phosphorylated at the N-terminus by CCAMK. In terms of tissue distribution, expressed in roots.

The protein resides in the nucleus. Involved in symbiotic signaling. Required for root infection by symbiotic rhizobia, infection thread (IT) formation, and nodule development. Probably not involved in nodule organogenesis. Involved in arbuscular mycorrhizal (AM) symbiosis. Required for fungal infection of the outer cortical cell layers, and for arbuscule development during the AM symbiosis, by binding, as a complex comprising CCaMK, CYCLOPS, and DELLA, to RAM1 promoter cis element thus promoting its expression. Acts downstream of CCAMK. Binds to the promoter of ERN1 and strongly transactivates ERN1, a transcriptional regulator required for nodulation. This chain is Protein CYCLOPS, found in Lotus japonicus (Lotus corniculatus var. japonicus).